A 530-amino-acid chain; its full sequence is Chondroitin sulfate N-acetylgalactosaminyltransferase 1 (530 aa).

Over 1-12 (MVRRGLLGWISR) the chain is Cytoplasmic. The chain crosses the membrane as a helical; Signal-anchor for type II membrane protein span at residues 13-33 (VVILLVLLCCAISVLYMLACT). Topologically, residues 34-530 (PKGDQEQLGL…QKQKASSKKT (497 aa)) are lumenal. A coiled-coil region spans residues 57-93 (AVLQEREEQHRNYVNSLKRQIAQLKDELQARSEQFRS). The disordered stretch occupies residues 88 to 107 (SEQFRSGQDQASDATSLRSG). Positions 91–105 (FRSGQDQASDATSLR) are enriched in polar residues. N-linked (GlcNAc...) asparagine glycans are attached at residues Asn313 and Asn322. A divalent metal cation-binding residues include Asp358 and His475.

The protein belongs to the chondroitin N-acetylgalactosaminyltransferase family.

The protein localises to the golgi apparatus. It is found in the golgi stack membrane. The catalysed reaction is 3-O-(beta-D-GlcA-(1-&gt;3)-beta-D-Gal-(1-&gt;3)-beta-D-Gal-(1-&gt;4)-beta-D-Xyl)-L-seryl-[protein] + UDP-N-acetyl-alpha-D-galactosamine = 3-O-(beta-D-GalNAc-(1-&gt;4)-beta-D-GlcA-(1-&gt;3)-beta-D-Gal-(1-&gt;3)-beta-D-Gal-(1-&gt;4)-beta-D-Xyl)-L-seryl-[protein] + UDP + H(+). In terms of biological role, transfers 1,4-N-acetylgalactosamine (GalNAc) from UDP-GalNAc to the non-reducing end of glucuronic acid (GlcUA). Required for addition of the first GalNAc to the core tetrasaccharide linker and for elongation of chondroitin chains. Important role in chondroitin chain biosynthesis in cartilage formation, and subsequent endochondral ossification. Moreover, is involved in the metabolism of aggrecan. In Mus musculus (Mouse), this protein is Chondroitin sulfate N-acetylgalactosaminyltransferase 1.